We begin with the raw amino-acid sequence, 337 residues long: Heat-inducible transcription repressor HrcA (337 aa).

It belongs to the HrcA family.

Its function is as follows. Negative regulator of class I heat shock genes (grpE-dnaK-dnaJ and groELS operons). Prevents heat-shock induction of these operons. The polypeptide is Heat-inducible transcription repressor HrcA (Pseudarthrobacter chlorophenolicus (strain ATCC 700700 / DSM 12829 / CIP 107037 / JCM 12360 / KCTC 9906 / NCIMB 13794 / A6) (Arthrobacter chlorophenolicus)).